A 655-amino-acid polypeptide reads, in one-letter code: Probable replication restart protein PriA (655 aa).

Zn(2+) is bound by residues cysteine 368, cysteine 371, cysteine 377, cysteine 380, cysteine 396, cysteine 399, cysteine 408, and cysteine 411.

The protein belongs to the helicase family. PriA subfamily. As to quaternary structure, component of the replication restart primosome. Requires Zn(2+) as cofactor.

Initiates the restart of stalled replication forks, which reloads the replicative helicase on sites other than the origin of replication. Recognizes and binds to abandoned replication forks and remodels them to uncover a helicase loading site. Promotes assembly of the primosome at these replication forks. In Mycobacterium bovis (strain ATCC BAA-935 / AF2122/97), this protein is Probable replication restart protein PriA.